The following is a 361-amino-acid chain: Dynein axonemal assembly factor 8 (361 aa).

Disordered stretches follow at residues 65 to 191 and 309 to 334; these read DPAG…ERRK and AQPG…RRPL. Polar residues predominate over residues 136–157; it reads TLNTSASQSPRQGPQGEATRSP. Residues serine 142 and serine 144 each carry the phosphoserine modification. Low complexity predominate over residues 321 to 334; sequence GSSSSSGHLGRRPL.

It is found in the dynein axonemal particle. Its subcellular location is the cytoplasm. In terms of biological role, in cyliated cells, dynein axonemal particle-specific protein required for deployment of ODA to the axoneme. Interacts with outer dynein arm (ODA) subunits. The protein is Dynein axonemal assembly factor 8 (DNAAF8) of Bos taurus (Bovine).